The chain runs to 330 residues: tRNA-modifying protein YgfZ (330 aa).

Folate is bound by residues tryptophan 28 and tryptophan 192.

Belongs to the tRNA-modifying YgfZ family.

The protein resides in the cytoplasm. Folate-binding protein involved in regulating the level of ATP-DnaA and in the modification of some tRNAs. It is probably a key factor in regulatory networks that act via tRNA modification, such as initiation of chromosomal replication. This Blochmanniella pennsylvanica (strain BPEN) protein is tRNA-modifying protein YgfZ.